Reading from the N-terminus, the 418-residue chain is uncharacterized protein (418 aa).

This is an uncharacterized protein from Escherichia coli O157:H7.